Consider the following 441-residue polypeptide: Zinc finger and BTB domain-containing protein 8A (441 aa).

Residues 24–92 form the BTB domain; sequence CDCSILVEGK…VYSGKLSLTG (69 aa). Composition is skewed to polar residues over residues 143-170 and 178-196; these read NGVE…SPEQ and KSWN…TQQP. The interval 143–251 is disordered; the sequence is NGVERSSFYS…QSEEQAQIDA (109 aa). Residues Ser161 and Ser167 each carry the phosphoserine modification. Residues Lys178, Lys182, Lys191, and Lys199 each participate in a glycyl lysine isopeptide (Lys-Gly) (interchain with G-Cter in SUMO2) cross-link. Basic and acidic residues predominate over residues 198-208; that stretch reads AKHEPRKESIK. The segment covering 234-243 has biased composition (low complexity); sequence SDSSSHVSQS. 2 C2H2-type zinc fingers span residues 282-304 and 310-333; these read FKCP…LRCH and YPCQ…RTIH. Lys437 participates in a covalent cross-link: Glycyl lysine isopeptide (Lys-Gly) (interchain with G-Cter in SUMO2).

The protein localises to the nucleus. In terms of biological role, may be involved in transcriptional regulation. This is Zinc finger and BTB domain-containing protein 8A (ZBTB8A) from Homo sapiens (Human).